A 95-amino-acid chain; its full sequence is Probable FAD-linked sulfhydryl oxidase OPG072 (95 aa).

The Intravirion portion of the chain corresponds to 1–8; the sequence is MNPKHWGR. The region spanning 1–95 is the ERV/ALR sulfhydryl oxidase domain; sequence MNPKHWGRAV…AIDVTKVNPL (95 aa). A helical transmembrane segment spans residues 9–25; sequence AVWTIIFIVLSQAGLDG. Over 26–95 the chain is Virion surface; sequence NIEACKRKLY…AIDVTKVNPL (70 aa). A disulfide bridge links Cys-43 with Cys-46.

It belongs to the orthopoxvirus OPG072 family. In terms of assembly, interacts with OPG128/A2.5; this interaction involves formation of a transient disulfide-bonded intermediate, allowing disulfide bond transfer. Requires FAD as cofactor.

It localises to the virion membrane. The protein localises to the host cytoplasm. It catalyses the reaction 2 R'C(R)SH + O2 = R'C(R)S-S(R)CR' + H2O2. In terms of biological role, FAD-dependent sulfhydryl oxidase that catalyzes disulfide bond formation. The complete pathway for formation of disulfide bonds in intracellular virion membrane proteins sequentially involves thiol-disulfide transfer between OPG072/E10, OPG128/A2.5 and OPG088/G4. The protein is Probable FAD-linked sulfhydryl oxidase OPG072 (OPG072) of Bos taurus (Bovine).